Consider the following 399-residue polypeptide: RNA-binding protein cabeza (399 aa).

Positions 1 to 12 (MERGGYGGGSGQ) are enriched in gly residues. A disordered region spans residues 1-82 (MERGGYGGGS…RGGNSYGNGG (82 aa)). Over residues 24–34 (YQQMPNKTGNY) the composition is skewed to polar residues. Positions 43–69 (KQGGGYDSGSGHRGSGGSGNGGGGGGS) are enriched in gly residues. The region spanning 120 to 206 (DTIFVSGMDP…NAIKVSLAQR (87 aa)) is the RRM domain. 2 disordered regions span residues 209 to 276 (NWNK…QPRD) and 300 to 399 (TPKG…SRPY). The segment covering 212–271 (KGGGGGGGGGGRGGFGGRRGGGGGGGGGGGGGGRFDRGGGGGGGRYDRGGGGGGGGGGGN) has biased composition (gly residues). Residues 275–304 (RDGDWKCNSCNNTNFAWRNECNRCKTPKGD) form a RanBP2-type zinc finger. Composition is skewed to gly residues over residues 308 to 339 (SSGG…GGGY), 347 to 361 (NSQG…GGGY), and 368 to 380 (NGGG…GGGG). The segment covering 387–399 (PMRNDGGMRSRPY) has biased composition (low complexity).

This sequence belongs to the RRM TET family. Ubiquitous. Enriched in the brain and central nervous system during embryogenesis. Enriched in the adult head. Embryos contain both isoforms A and B, whereas later in development (heads and torsos) only isoform B is detected.

The protein localises to the nucleus. Its function is as follows. May participate in a function common to the expression of most genes transcribed by RNA polymerase II. This is RNA-binding protein cabeza (caz) from Drosophila melanogaster (Fruit fly).